A 320-amino-acid chain; its full sequence is Malate dehydrogenase (320 aa).

NAD(+) contacts are provided by residues 10–15 and aspartate 34; that span reads GSGMIG. Substrate is bound by residues arginine 83 and arginine 89. NAD(+)-binding positions include asparagine 96 and 119-121; that span reads ITN. Asparagine 121 and arginine 152 together coordinate substrate. Histidine 176 functions as the Proton acceptor in the catalytic mechanism.

This sequence belongs to the LDH/MDH superfamily. MDH type 3 family.

It catalyses the reaction (S)-malate + NAD(+) = oxaloacetate + NADH + H(+). Its function is as follows. Catalyzes the reversible oxidation of malate to oxaloacetate. The chain is Malate dehydrogenase from Brucella abortus (strain S19).